A 1637-amino-acid polypeptide reads, in one-letter code: Glutamate rich 3 (1637 aa).

Disordered stretches follow at residues Pro-145–Leu-192, Pro-408–Cys-453, Glu-478–Gly-814, Val-1111–Glu-1194, Ile-1238–Arg-1445, and Lys-1457–Ala-1637. Positions Leu-169 to Ser-185 are enriched in polar residues. 3 stretches are compositionally biased toward basic and acidic residues: residues Glu-416–Pro-426, Lys-443–Ser-452, and Glu-478–Val-487. Over residues Tyr-500–Asp-523 the composition is skewed to acidic residues. Over residues Thr-534 to Ser-557 the composition is skewed to basic and acidic residues. The span at Glu-558–Arg-572 shows a compositional bias: acidic residues. Composition is skewed to low complexity over residues Ser-579–Ser-590 and Glu-608–Ser-617. 8 stretches are compositionally biased toward basic and acidic residues: residues Asp-619 to Glu-638, Glu-677 to Ala-693, Gln-769 to Met-802, Glu-1115 to Gly-1130, Leu-1264 to Glu-1307, Lys-1319 to Ala-1329, Ser-1342 to Glu-1357, and Arg-1402 to Asp-1412. Polar residues predominate over residues Val-1476–Met-1487. 3 stretches are compositionally biased toward basic and acidic residues: residues Ala-1550–Val-1568, Ala-1589–Ala-1599, and Gly-1614–Ala-1637.

The protein resides in the cell projection. It is found in the cilium. It localises to the cytoplasm. In terms of biological role, component of the primary cilium that controls cilium formation and length. May function within retrograde intraflagellar transport (IFT)-associated pathways to remove signaling proteins from primary cilia. Also involved in neuronal vesicle biogenesis and neurotransmitter vesicular function. The sequence is that of Glutamate rich 3 from Mus musculus (Mouse).